A 406-amino-acid chain; its full sequence is Ribonuclease D (406 aa).

One can recognise a 3'-5' exonuclease domain in the interval 26–193; sequence LITQTTDLEI…VYLLLKKQLE (168 aa). Positions 231 to 312 constitute an HRDC domain; the sequence is KPRELAVLQK…HEGLEVDLAT (82 aa).

This sequence belongs to the RNase D family. The cofactor is a divalent metal cation.

The protein resides in the cytoplasm. It catalyses the reaction Exonucleolytic cleavage that removes extra residues from the 3'-terminus of tRNA to produce 5'-mononucleotides.. Its function is as follows. Exonuclease involved in the 3' processing of various precursor tRNAs. Initiates hydrolysis at the 3'-terminus of an RNA molecule and releases 5'-mononucleotides. This Bartonella henselae (strain ATCC 49882 / DSM 28221 / CCUG 30454 / Houston 1) (Rochalimaea henselae) protein is Ribonuclease D.